We begin with the raw amino-acid sequence, 368 residues long: Propane 2-monooxygenase, hydroxylase component small subunit (368 aa).

This sequence belongs to the TmoE/XamoE family. In terms of assembly, the propane 2-monooxygenase multicomponent enzyme system is composed of an electron transfer component and a monooxygenase component interacting with the effector protein PrmD. The electron transfer component is composed of a reductase (PrmB), and the monooxygenase component is formed by a large subunit (PrmA) and a small subunit (PrmC). Probably requires the presence of the chaperonin-like protein PrmG to ensure a productive folding, resulting of a soluble PrmC, which leads to the active form of PrmABCD.

The enzyme catalyses propane + NADH + O2 + H(+) = propan-2-ol + NAD(+) + H2O. Its function is as follows. Component of the propane 2-monooxygenase multicomponent enzyme system which is involved in the degradation of propane via the O2-dependent hydroxylation of propane. Also able to catalyze the oxidation the water contaminant N-nitrosodimethylamine (NDMA). This Rhodococcus jostii (strain RHA1) protein is Propane 2-monooxygenase, hydroxylase component small subunit.